The chain runs to 864 residues: Dynamin-1 (864 aa).

The Dynamin-type G domain occupies 28–294 (DLDLPQIAVV…LTNHIRDTLP (267 aa)). The interval 38-45 (GGQSAGKS) is G1 motif. Positions 41, 43, 44, 45, 46, 59, and 60 each coordinate GDP. A G2 motif region spans residues 64–66 (VTR). The residue at position 80 (Tyr-80) is a Phosphotyrosine. At Tyr-125 the chain carries 3'-nitrotyrosine; alternate. Position 125 is a phosphotyrosine; alternate (Tyr-125). Residues 136–139 (DLPG) are G3 motif. Residues 205–208 (TKLD) form a G4 motif region. Lys-206, Asp-208, Asp-211, Asn-236, Arg-237, and Gln-239 together coordinate GDP. The tract at residues 235–238 (VNRS) is G5 motif. Phosphoserine occurs at positions 306 and 347. At Tyr-354 the chain carries Phosphotyrosine. Position 512 is a phosphoserine (Ser-512). The region spanning 519 to 625 (LVIRKGWLTI…WKASFLRAGV (107 aa)) is the PH domain. The GED domain occupies 659–750 (VETIRNLVDS…IIGDINTTTV (92 aa)). Residues 767 to 864 (SVPAGRRSPT…PESPRPPFDL (98 aa)) are disordered. Ser-774 is modified (phosphoserine; by CDK5). Ser-778 carries the phosphoserine modification. Omega-N-methylarginine is present on Arg-796. Ser-822 carries the phosphoserine modification. A compositionally biased stretch (pro residues) spans 825-843 (PFGPPPQVPSRPNRAPPGV). A phosphoserine mark is found at Ser-851 and Ser-857.

It belongs to the TRAFAC class dynamin-like GTPase superfamily. Dynamin/Fzo/YdjA family. Homodimer; homodimerization is mediated by the dynamin-type G domain which promotes assembly-stimulated GTPase activity. Homo-tetramer formed from two dimers in the absence of lipid. Oligomerizes into a helical polymer that self-assembles around the vesicle membrane, when associated to the menbrane through lipid binding. Interacts (via C-terminal proline-rich domain (PRD)) with SNX9 (via SH3 domain); this interaction allows regulation of DNM1 self-assembly during late stages of endocytic vesicle formation and supports DNM1's early functions in accelerating clathrin-coated pits (CCPs) maturation in non neuronals cell. Interacts (via C-terminal proline-rich domain (PRD)) with MYO1E (via SH3 domain); this interaction regulates receptor-mediated endocytosis. Interacts with SNX33 (via SH3 domain); this interaction decreases DNM1-dependent endocytosis. Interacts with DIAPH1. Interacts with GRB2 (via SH3 domain); this interaction mediates disassembly of DNM1 polymers, therefore modulates self-assembly. Forms a complex with BIN1 (via SH3 domain) and SH3GL2 (via SH3 domain). Forms a complex with SH3GL2 (via SH3 domain) and AMPH (via SH3 domain). Forms a complex with SH3GL2 (via SH3 domain) and SYNJ1. Interacts with AMPH. Interacts (via C-terminal proline-rich domain (PRD)) with SYT1; this interaction facilitates vesicle fission during clathrin-mediated endocytosis (CME). Interacts (via C-terminal proline-rich domain (PRD)) with PLCG1 (via SH3 domain); this interaction stimulates the release of GDP from DNM1 and enhances DNM1-dependent endocytosis. Interacts with SNPH; this interaction inhibits the binding of DNM1 to AMPH and DNM1-receptor-mediated endocytosis. Interacts with CAV1. Interacts with SH3GLB1 (via SH3 domain). Interacts with PACSIN1 (via SH3 domain), PACSIN2 (via SH3 domain) and PACSIN3 (via SH3 domain). Interacts with UNC119; this interaction decreases DNM1's GTPase activity and affects DNM1's interaction with AMPH. Interacts (GTP-bound form) with DNAJC6; this interaction allows clathrin-coated vesicle (CCV) formation at the plasma membrane. Post-translationally, phosphorylation at Ser-774 by GSK3B/GSK3-beta leads to inactivation of receptor-mediated endocytosis in non-neuronal cells. Dephosphorylation at Ser-774, through the EGFR downstream signaling, leads to activation and regulates early stages of clathrin-mediated endocytosis (CME). Phosphorylated by CDK5 leading to synaptic vesicle endocytosis (SVE) activation. As to expression, brain-specific (peripheral sensory neurons).

It localises to the cytoplasmic vesicle. It is found in the clathrin-coated vesicle. The protein resides in the golgi apparatus. Its subcellular location is the cell membrane. The protein localises to the membrane. It localises to the clathrin-coated pit. It is found in the presynapse. The protein resides in the secretory vesicle. Its subcellular location is the chromaffin granule. The enzyme catalyses GTP + H2O = GDP + phosphate + H(+). In terms of biological role, catalyzes the hydrolysis of GTP and utilizes this energy to mediate vesicle scission and participates in many forms of endocytosis, such as clathrin-mediated endocytosis or synaptic vesicle endocytosis as well as rapid endocytosis (RE). Associates to the membrane, through lipid binding, and self-assembles into rings and stacks of interconnected rings through oligomerization to form a helical polymer around the vesicle membrane leading to constriction of invaginated coated pits around their necks. Self-assembly of the helical polymer induces membrane tubules narrowing until the polymer reaches a length sufficient to trigger GTP hydrolysis. Depending on the curvature imposed on the tubules, membrane detachment from the helical polymer upon GTP hydrolysis can cause spontaneous hemifission followed by complete fission. May play a role in regulating early stages of clathrin-mediated endocytosis in non-neuronal cells through its activation by dephosphorylation via the signaling downstream of EGFR. Controls vesicle size at a step before fission, during formation of membrane pits, at hippocampal synapses. Controls plastic adaptation of the synaptic vesicle recycling machinery to high levels of activity. Mediates rapid endocytosis (RE), a Ca(2+)-dependent and clathrin- and K(+)-independent process in chromaffin cells. Microtubule-associated force-producing protein involved in producing microtubule bundles and able to bind and hydrolyze GTP. Through its interaction with DNAJC6, acts during the early steps of clathrin-coated vesicle (CCV) formation. This chain is Dynamin-1 (Dnm1), found in Rattus norvegicus (Rat).